The following is a 564-amino-acid chain: Proline--tRNA ligase (564 aa).

Belongs to the class-II aminoacyl-tRNA synthetase family. ProS type 1 subfamily. Homodimer.

The protein localises to the cytoplasm. The enzyme catalyses tRNA(Pro) + L-proline + ATP = L-prolyl-tRNA(Pro) + AMP + diphosphate. Functionally, catalyzes the attachment of proline to tRNA(Pro) in a two-step reaction: proline is first activated by ATP to form Pro-AMP and then transferred to the acceptor end of tRNA(Pro). As ProRS can inadvertently accommodate and process non-cognate amino acids such as alanine and cysteine, to avoid such errors it has two additional distinct editing activities against alanine. One activity is designated as 'pretransfer' editing and involves the tRNA(Pro)-independent hydrolysis of activated Ala-AMP. The other activity is designated 'posttransfer' editing and involves deacylation of mischarged Ala-tRNA(Pro). The misacylated Cys-tRNA(Pro) is not edited by ProRS. The polypeptide is Proline--tRNA ligase (Xanthomonas oryzae pv. oryzae (strain KACC10331 / KXO85)).